The following is a 968-amino-acid chain: MPFTLGQRWISDTESELGLGTVVAIDARMVTLLFPATGENRLYARNDSPVTRVMFNPGDTVTSHEGWQLKVDEVKEENGLLIYIGTRLDTLEENVALREVFLDSKLVFSKPQDRLFAGQIDRMDRFALRYRARKYQSEQYRMPWSGLRGQRTNLIPHQLNIANDVGRRHAPRVLLADEVGLGKTIEAGMIIHQQLLAGAAERVLIVVPETLQHQWLVEMLRRFNLRFSLFDDERYAEAQHESDNPFDTEQLVICSLDFVRRNKQRLEHLCDAEWDLLVVDEAHHLVWSEDAPSREYQAIEQLAERVPGVLLLTATPEQLGMESHFARLRLLDPNRFHDFAQFVEEQQNYRPVADAVALLLAGTHLSDEQLNTLSELIGEQDIEPLLQTANSDRDGAESARQELVSMLMDRHGTSRVLFRNTRNGVKGFPQRELHTIKLPLPTQYQTAIKVSGIMGARKSAEERARDMLYPEQIYQEFEGDSGTWWNFDPRVEWLMGYLTSHRSQKVLVICAKAATALQLEQVLREREGIRAAVFHEGMSIIERDRAAAWFAEEDTGAQVLLCSEIGSEGRNFQFASQLVMFDLPFNPDLLEQRIGRLDRIGQAHDIQIHVPYLEKTAQSVLVRWYHEGLDAFEHTCPTGRAIYDSVYEQLIGYLAAPENTEGFDALIQACRKQHDELKAQLEQGRDRLLEIHSNGGEKAQQLADAIAEQDDDTGLVNFAMNLFDIVGINQDDRGEHMIVLTPSDHMLVPDFPGLPEDGCTITFNRDVALSREDAQFITWEHPLIRNGLDLILSGDTGSCTISLLKNKALPVGTLLLELIYVVEAKAPKQLQLNRFLPPTPVRMLLDKNGNNLAGQVEFESFNRQLSAVNRHTGSKLVNAVQQEVHAILQGGEAQVEKAARELIDAARQEADDKLSAELSRLEALRAVNPNIRDDELAAIEHNRQQVLENLNQASWRLDALRLIVVTHQ.

The 171-residue stretch at D164–N334 folds into the Helicase ATP-binding domain. D177–T184 provides a ligand contact to ATP. The short motif at D280–H283 is the DEAH box element. Positions R490–G662 constitute a Helicase C-terminal domain.

This sequence belongs to the SNF2/RAD54 helicase family. RapA subfamily. As to quaternary structure, interacts with the RNAP. Has a higher affinity for the core RNAP than for the holoenzyme. Its ATPase activity is stimulated by binding to RNAP.

In terms of biological role, transcription regulator that activates transcription by stimulating RNA polymerase (RNAP) recycling in case of stress conditions such as supercoiled DNA or high salt concentrations. Probably acts by releasing the RNAP, when it is trapped or immobilized on tightly supercoiled DNA. Does not activate transcription on linear DNA. Probably not involved in DNA repair. This is RNA polymerase-associated protein RapA from Cronobacter sakazakii (strain ATCC BAA-894) (Enterobacter sakazakii).